A 484-amino-acid polypeptide reads, in one-letter code: ATP synthase subunit beta (484 aa).

An ATP-binding site is contributed by 168 to 175 (GGAGVGKT).

The protein belongs to the ATPase alpha/beta chains family. As to quaternary structure, F-type ATPases have 2 components, CF(1) - the catalytic core - and CF(0) - the membrane proton channel. CF(1) has five subunits: alpha(3), beta(3), gamma(1), delta(1), epsilon(1). CF(0) has three main subunits: a(1), b(2) and c(9-12). The alpha and beta chains form an alternating ring which encloses part of the gamma chain. CF(1) is attached to CF(0) by a central stalk formed by the gamma and epsilon chains, while a peripheral stalk is formed by the delta and b chains.

The protein localises to the cell membrane. It catalyses the reaction ATP + H2O + 4 H(+)(in) = ADP + phosphate + 5 H(+)(out). Functionally, produces ATP from ADP in the presence of a proton gradient across the membrane. The catalytic sites are hosted primarily by the beta subunits. This chain is ATP synthase subunit beta, found in Pseudarthrobacter chlorophenolicus (strain ATCC 700700 / DSM 12829 / CIP 107037 / JCM 12360 / KCTC 9906 / NCIMB 13794 / A6) (Arthrobacter chlorophenolicus).